Consider the following 255-residue polypeptide: MFAPSRRRVLEAVASSSSSPVVTLPGFLVPAFQQTAGAAARRNFSATTTRPSKLGRTPLSIPPGVEITIGEPFVKRDMTQWKQQPKRKITVQGPLGQLEMDIPDFIKIDHDAEARRATLSVANRDEKEQREMWGTTWAYLNRFIMGVSEGHTAVLRLVGIGYRATIDTRPEKEEYPGQQFVCLKLGFSHPVEMGVPKGMKASTPQPTRILLEGINREQVMTFAADIRRWRVPEPYKGKGIFVNGETIKLKQKKIK.

The segment at Ala-39 to Ile-61 is disordered.

This sequence belongs to the universal ribosomal protein uL6 family. Component of the mitochondrial large ribosomal subunit (mt-LSU). Mature N.crassa 74S mitochondrial ribosomes consist of a small (37S) and a large (54S) subunit. The 37S small subunit contains a 16S ribosomal RNA (16S mt-rRNA) and 32 different proteins. The 54S large subunit contains a 23S rRNA (23S mt-rRNA) and 42 different proteins.

The protein localises to the mitochondrion. Component of the mitochondrial ribosome (mitoribosome), a dedicated translation machinery responsible for the synthesis of mitochondrial genome-encoded proteins, including at least some of the essential transmembrane subunits of the mitochondrial respiratory chain. The mitoribosomes are attached to the mitochondrial inner membrane and translation products are cotranslationally integrated into the membrane. This Neurospora crassa (strain ATCC 24698 / 74-OR23-1A / CBS 708.71 / DSM 1257 / FGSC 987) protein is Large ribosomal subunit protein uL6m (mrpl6).